A 390-amino-acid polypeptide reads, in one-letter code: Probable purine permease 10 (390 aa).

A run of 10 helical transmembrane segments spans residues 44 to 64 (WLRVTLYTFFVISGQTVATIL), 78 to 98 (LATVVQLVGFPVLLPYYILSF), 117 to 137 (VLVYVVLGLLVGADCYLYSIG), 140 to 160 (YLPVSTYSLICASQLAFNAFF), 169 to 189 (LTPIILNSLFLLTISSTLLAF), 204 to 224 (YVKGFICTVAASAGYGLVLSL), 241 to 261 (VMDMIIYVSLVASCVSVVGLF), 287 to 307 (LVWTAVTWQVFSIGGTGLIFE), 312 to 332 (FSNAISVLGLPVVPILAVIIF), and 336 to 356 (MNGLKVISMILAIWGFTSYVY). Residues 370–390 (EITTTESPDPPEAEESTWQSK) are disordered.

Belongs to the purine permeases (TC 2.A.7.14) family.

The protein resides in the membrane. This Arabidopsis thaliana (Mouse-ear cress) protein is Probable purine permease 10 (PUP10).